Reading from the N-terminus, the 179-residue chain is Large ribosomal subunit protein uL6 (179 aa).

It belongs to the universal ribosomal protein uL6 family. As to quaternary structure, part of the 50S ribosomal subunit.

Its function is as follows. This protein binds to the 23S rRNA, and is important in its secondary structure. It is located near the subunit interface in the base of the L7/L12 stalk, and near the tRNA binding site of the peptidyltransferase center. The polypeptide is Large ribosomal subunit protein uL6 (Streptomyces griseus subsp. griseus (strain JCM 4626 / CBS 651.72 / NBRC 13350 / KCC S-0626 / ISP 5235)).